The sequence spans 443 residues: sn-2 acyl-lipid omega-3 desaturase (ferredoxin), chloroplastic (443 aa).

The transit peptide at 1–51 (MAGLVLSGCAIKPFSQSLPIPTKRFITNPSNINLLHPKDPIFSPNFHGFSR) directs the protein to the chloroplast. 2 helical membrane-spanning segments follow: residues 120–140 (MSYV…AAHL) and 143–163 (WLVW…LFVL). A Histidine box-1 motif is present at residues 165 to 169 (HDCGH). Residues 201–205 (HRTHH) carry the Histidine box-2 motif. The next 2 membrane-spanning stretches (helical) occupy residues 281 to 301 (TICW…VGPV) and 304 to 324 (LKLY…VTYL). Residues 368–372 (HVIHH) carry the Histidine box-3 motif.

The protein belongs to the fatty acid desaturase type 1 family. As to expression, highly expressed in leaves and cotyledons, while no or little expression detected in mature seeds, roots and stems.

It localises to the plastid. The protein resides in the chloroplast membrane. It catalyses the reaction a (7Z,10Z)-hexadecadienoyl-containing glycerolipid + 2 reduced [2Fe-2S]-[ferredoxin] + O2 + 2 H(+) = a (7Z,10Z,13Z)-hexadecatrienoyl-containing glycerolipid + 2 oxidized [2Fe-2S]-[ferredoxin] + 2 H2O. The catalysed reaction is a (9Z,12Z)-octadecadienoyl-containing glycerolipid + 2 reduced [2Fe-2S]-[ferredoxin] + O2 + 2 H(+) = (9Z,12Z,15Z)-octadecatrienoyl-containing glycerolipid + 2 oxidized [2Fe-2S]-[ferredoxin] + 2 H2O. The protein operates within lipid metabolism; polyunsaturated fatty acid biosynthesis. In terms of biological role, chloroplast omega-3 fatty acid desaturase introduces the third double bond in the biosynthesis of 18:3, and probably also 16:3 fatty acids, important constituents of plant membranes. It is thought to use ferredoxin as an electron donor and to act on fatty acids esterified to galactolipids, sulfolipids and phosphatidylglycerol. The chain is sn-2 acyl-lipid omega-3 desaturase (ferredoxin), chloroplastic from Helianthus annuus (Common sunflower).